The following is a 292-amino-acid chain: AT-hook motif nuclear-localized protein 23 (292 aa).

Residues 23-100 (HLHHNSSSDD…SKNKPKPPVI (78 aa)) are disordered. Residues 60–79 (SGGGSGSSGGGGGHGGGGDV) show a composition bias toward gly residues. The segment at residues 82 to 94 (RRPRGRPPGSKNK) is a DNA-binding region (a.T hook). Residues 106-242 (ANTLRAHILE…EDEQQQQLGG (137 aa)) enclose the PPC domain.

It localises to the nucleus. Its function is as follows. Transcription factor that specifically binds AT-rich DNA sequences related to the nuclear matrix attachment regions (MARs). The protein is AT-hook motif nuclear-localized protein 23 of Arabidopsis thaliana (Mouse-ear cress).